Consider the following 562-residue polypeptide: Dihydroxy-acid dehydratase (562 aa).

Asp-80 provides a ligand contact to Mg(2+). Cys-121 is a [2Fe-2S] cluster binding site. Mg(2+) contacts are provided by Asp-122 and Lys-123. N6-carboxylysine is present on Lys-123. Cys-194 provides a ligand contact to [2Fe-2S] cluster. Glu-446 lines the Mg(2+) pocket. Catalysis depends on Ser-472, which acts as the Proton acceptor.

Belongs to the IlvD/Edd family. In terms of assembly, homodimer. It depends on [2Fe-2S] cluster as a cofactor. Requires Mg(2+) as cofactor.

The catalysed reaction is (2R)-2,3-dihydroxy-3-methylbutanoate = 3-methyl-2-oxobutanoate + H2O. It catalyses the reaction (2R,3R)-2,3-dihydroxy-3-methylpentanoate = (S)-3-methyl-2-oxopentanoate + H2O. It participates in amino-acid biosynthesis; L-isoleucine biosynthesis; L-isoleucine from 2-oxobutanoate: step 3/4. It functions in the pathway amino-acid biosynthesis; L-valine biosynthesis; L-valine from pyruvate: step 3/4. Functionally, functions in the biosynthesis of branched-chain amino acids. Catalyzes the dehydration of (2R,3R)-2,3-dihydroxy-3-methylpentanoate (2,3-dihydroxy-3-methylvalerate) into 2-oxo-3-methylpentanoate (2-oxo-3-methylvalerate) and of (2R)-2,3-dihydroxy-3-methylbutanoate (2,3-dihydroxyisovalerate) into 2-oxo-3-methylbutanoate (2-oxoisovalerate), the penultimate precursor to L-isoleucine and L-valine, respectively. The sequence is that of Dihydroxy-acid dehydratase from Staphylococcus aureus (strain Mu50 / ATCC 700699).